The chain runs to 782 residues: General transcription and DNA repair factor IIH helicase/translocase subunit XPB (782 aa).

The segment covering 1–11 has biased composition (basic and acidic residues); the sequence is MGKRDRVDRDK. Positions 1 to 52 are disordered; that stretch reads MGKRDRVDRDKKKSKKRQYEEEEEDEDDAPGNESQEAVPSAAGKQVDESSTK. The Nuclear localization signal signature appears at 6-18; the sequence is RVDRDKKKSKKRQ. Residues 20–30 show a composition bias toward acidic residues; that stretch reads EEEEEDEDDAP. S34 carries the phosphoserine modification. The Helicase ATP-binding domain maps to 328-489; the sequence is FGNGRARSGV…LNFLIGPKLY (162 aa). Residue 341-348 participates in ATP binding; sequence PCGAGKSL. The DEVH box motif lies at 442-445; sequence EVHT. The Helicase C-terminal domain occupies 543–703; sequence ACQFLIKFHE…AGMEEEELAF (161 aa). At S686 the chain carries Phosphoserine. S751 carries the post-translational modification Phosphoserine; by CK2.

This sequence belongs to the helicase family. RAD25/XPB subfamily. Component of the 7-subunit TFIIH core complex composed of XPB/ERCC3, XPD/ERCC2, GTF2H1, GTF2H2, GTF2H3, GTF2H4 and GTF2H5, which is active in NER. The core complex associates with the 3-subunit CDK-activating kinase (CAK) module composed of CCNH/cyclin H, CDK7 and MNAT1 to form the 10-subunit holoenzyme (holo-TFIIH) active in transcription. Interacts with PUF60. Interacts with ATF7IP. Interacts with KAT2A; leading to KAT2A recruitment to promoters and acetylation of histones. Part of TBP-based Pol II pre-initiation complex (PIC), in which Pol II core assembles with general transcription factors and other specific initiation factors including GTF2E1, GTF2E2, GTF2F1, GTF2F2, TCEA1, ERCC2, ERCC3, GTF2H2, GTF2H3, GTF2H4, GTF2H5, GTF2A1, GTF2A2, GTF2B and TBP; this large multi-subunit PIC complex mediates DNA unwinding and targets Pol II core to the transcription start site where the first phosphodiester bond forms. Phosphorylation on Ser-751 by CK2 controls the 5'-excision activity of ERCC1-XPF endonuclease; phosphorylated protein inhibits the excision activity and thus NER. Dephosphorylation reactivates the 5'-excision step. Phosphorylation has no effect on transcription or the 3'-5' helicase activity.

The protein localises to the nucleus. The enzyme catalyses Couples ATP hydrolysis with the unwinding of duplex DNA by translocating in the 3'-5' direction.. The catalysed reaction is ATP + H2O = ADP + phosphate + H(+). Phosphorylation on Ser-751 by CK2 controls the 5'-excision activity of ERCC1-XPF endonuclease; phosphorylated protein inhibits the excision activity and thus NER. ATPase activity is stimulated by TFIIH subunit p52 (GTF2H4). DNA translocase activity by this subunit in TFIIH is stimulated by XPA, ERCC5/XPG and XFP plus ERCC1. ATP-dependent 3'-5' DNA helicase/translocase; binds dsDNA rather than ssDNA, unzipping it in a translocase rather than classical helicase activity. Component of the general transcription and DNA repair factor IIH (TFIIH) core complex. When complexed to CDK-activating kinase (CAK), involved in RNA transcription by RNA polymerase II. The ATPase activity of XPB/ERCC3, but not its helicase activity, is required for DNA opening; it may wrap around the damaged DNA wedging it open, causing localized melting and twisting that allows XPD/ERCC2 helicase to anchor. The ATP-dependent helicase activity of XPB/ERCC3 may be required for promoter escape. Also involved in transcription-coupled nucleotide excision repair (NER) of damaged DNA. In NER, TFIIH acts by opening DNA around the lesion to allow the excision of the damaged oligonucleotide and its replacement by a new DNA fragment. The structure of the TFIIH transcription complex differs from the NER-TFIIH complex; large movements by XPD/ERCC2 and XPB/ERCC3 are stabilized by XPA. This is General transcription and DNA repair factor IIH helicase/translocase subunit XPB (Ercc3) from Rattus norvegicus (Rat).